Here is a 504-residue protein sequence, read N- to C-terminus: Subtilisin-like protease 1 (504 aa).

An N-terminal signal peptide occupies residues methionine 1–alanine 19. A propeptide spanning residues alanine 20–histidine 116 is cleaved from the precursor. Positions serine 34–histidine 116 constitute an Inhibitor I9 domain. One can recognise a Peptidase S8 domain in the interval serine 126–lysine 400. Active-site charge relay system residues include aspartate 158 and histidine 190. The disordered stretch occupies residues alanine 172–methionine 198. Asparagine 233 and asparagine 251 each carry an N-linked (GlcNAc...) asparagine glycan. A compositionally biased stretch (polar residues) spans asparagine 282–serine 294. The interval asparagine 282 to serine 312 is disordered. The active-site Charge relay system is serine 345. Over residues threonine 378–isoleucine 394 the composition is skewed to polar residues. Residues threonine 378–aspartate 483 form a disordered region. 2 stretches are compositionally biased toward pro residues: residues asparagine 405–proline 449 and alanine 457–proline 473.

This sequence belongs to the peptidase S8 family.

The protein resides in the secreted. Its function is as follows. Secreted subtilisin-like serine protease with keratinolytic activity that contributes to pathogenicity. The polypeptide is Subtilisin-like protease 1 (SUB1) (Trichophyton rubrum (Athlete's foot fungus)).